Reading from the N-terminus, the 858-residue chain is MSSVMETPHAGKLKKYEFTPIGYAEEKRKEGIDLLKENGLKRSLESGSDLPAERKRVRNPSVVDETFSSTRLFNDTSFDETVPEGIIQERRPNSRKNLVDDLLIKDQETTENLTSNPLKETESSLKKLQMENYNLRIKCTSLLKFLNNISDDGEIVKNLEILDELDDLKVRYRQLNLDYTALQKQCDRIEDQNDEHEDIAKLKESNDKLKEELRSTKENLIDTDAQLQQLKDTIKSLENKIFNMRTEQTEKECQHGMQVDLLQSKINETSTSLTSKERECSDLKEKIKWLTSQLQEFDHQSGSLLDLQSTLDSKNEAIRNLEAQLQRNEHQRQSLEREVSLLQEELSSIRETHQKIITHKDQQIKQLTENLSSSDSEAVKRLNELSSERLRLLETNKSLKFSEKDLKQTVKSLEDQLNSCQEELHASQDKHKEKVSELLRKQLPYTSSEVEAMRQELLEMRKSNDILKTENNSLSRRLDNLIRQSPSKKSVEVDIQRKNNEIRALRSTVKDLEHELQDVTSNVSKLKENHKEEIQKLRKQVNPDLPTDVLEEKSKLQNRISLLQMELNSIKDTKEKELAMWRRKYETIRRSNEELLQEGKDQSGQLSNILNEKDKEILQLQSRFNSLLTEKNSLLNELSKVRSHKDDYKEELKKNQSRLEFITKEFVKLKDASKQAENSEDAKDILNNKWYSKYQSMKDKFLGELKSLQDENLELQKSLLKQKANPNSTAEVFSKTTEKGTLKDEIDYYRLKYANEVKQNNDLKTMNQYLNRVLRASSQHVKLDILKLQNEVPVYNPYADIPFHNMRFSHQKIKFKTVALLVLSCIRMKTTIEARRWDRQRLDYLKRKIVLNQDNISW.

Residues 118 to 725 (LKETESSLKK…QKSLLKQKAN (608 aa)) are a coiled coil.

The protein belongs to the SPC110 family. As to quaternary structure, homodimer.

The protein resides in the nucleus. The protein localises to the cytoplasm. Its subcellular location is the cytoskeleton. It localises to the microtubule organizing center. It is found in the spindle pole body. Component of the spindle pole body (SPB) required for the proper execution of spindle pole body (SPB) duplication. Potential role in cross-linking filaments or anchoring other molecules. It is essential for growth. The chain is Spindle pole body component 110 (SPC110) from Kluyveromyces lactis (strain ATCC 8585 / CBS 2359 / DSM 70799 / NBRC 1267 / NRRL Y-1140 / WM37) (Yeast).